A 138-amino-acid chain; its full sequence is Basic phospholipase A2 homolog Ts-K49a (138 aa).

An N-terminal signal peptide occupies residues 1 to 16 (MRTLWIMAVLLLGVEG). Intrachain disulfides connect cysteine 42–cysteine 131, cysteine 44–cysteine 60, cysteine 59–cysteine 111, cysteine 65–cysteine 138, cysteine 66–cysteine 104, cysteine 73–cysteine 97, and cysteine 91–cysteine 102. The tract at residues 121–133 (KKKKINLKLFCKK) is important for membrane-damaging activities in eukaryotes and bacteria; heparin-binding.

In terms of tissue distribution, expressed by the venom gland.

The protein localises to the secreted. Functionally, snake venom phospholipase A2 homolog that lacks catalytic activity. It shows myotoxic and weak anticoagulant activities and induces local edema a few hours after injection (5-10 ug) in the hind paw. A model of myotoxic mechanism has been proposed: an apo Lys49-PLA2 is activated by the entrance of a hydrophobic molecule (e.g. fatty acid) at the hydrophobic channel of the protein leading to a reorientation of a monomer. This reorientation causes a transition between 'inactive' to 'active' states, causing alignment of C-terminal and membrane-docking sites (MDoS) side-by-side and putting the membrane-disruption sites (MDiS) in the same plane, exposed to solvent and in a symmetric position for both monomers. The MDoS region stabilizes the toxin on membrane by the interaction of charged residues with phospholipid head groups. Subsequently, the MDiS region destabilizes the membrane with penetration of hydrophobic residues. This insertion causes a disorganization of the membrane, allowing an uncontrolled influx of ions (i.e. calcium and sodium), and eventually triggering irreversible intracellular alterations and cell death. The sequence is that of Basic phospholipase A2 homolog Ts-K49a from Trimeresurus stejnegeri (Chinese green tree viper).